A 201-amino-acid polypeptide reads, in one-letter code: Ras-related protein Rab-1B (201 aa).

Residue Met1 is modified to N-acetylmethionine. Positions 17, 18, 19, 20, 21, 22, 23, 33, 34, 35, 36, 39, and 40 each coordinate GTP. A Mg(2+)-binding site is contributed by Ser22. A Switch 1 motif is present at residues 30-45 (DDTYTESYISTIGVDF). Mg(2+)-binding residues include Thr40 and Asp63. Positions 64 to 83 (TAGQERFRTITSSYYRGAHG) are switch 2 region; required for interaction with REP1/CHM. A Switch 2 motif is present at residues 65 to 80 (AGQERFRTITSSYYRG). Gly66 is a GTP binding site. Ser76 bears the (Microbial infection) O-(2-cholinephosphoryl)serine mark. Residue Tyr77 is modified to (Microbial infection) O-AMP-tyrosine. Residues Asn121, Lys122, Asp124, Ser151, Ala152, and Lys153 each contribute to the GTP site. The segment at 174 to 201 (GPGAASGGERPNLKIDSTPVKPAGGGCC) is disordered. 2 S-geranylgeranyl cysteine lipidation sites follow: Cys200 and Cys201. Cys201 bears the Cysteine methyl ester mark.

It belongs to the small GTPase superfamily. Rab family. In terms of assembly, interacts with MICAL1 and MICAL2. Interacts (in GTP-bound form) with MICALCL, MICAL1 and MILCAL3. Interacts with GDI1; the interaction requires the GDP-bound state. Interacts with CHM/REP1; the interaction requires the GDP-bound form and is necessary for prenylation by GGTase II. Interacts with RabGAP TBC1D20. Interacts (in GDP-bound form) with lipid phosphatase MTMR6 (via GRAM domain); the interaction regulates MTMR6 recruitment to the endoplasmic reticulum-Golgi intermediate compartment. Interacts (in GDP-bound form) with lipid phosphatase MTMR7. As to quaternary structure, (Microbial infection) Interacts with L.pneumophila AnkX. Interacts with L.pneumophila Lem3. Interacts with L.pneumophila SidD. Interacts with L.pneumophila DrrA. Requires Mg(2+) as cofactor. Post-translationally, prenylated; by GGTase II, only after interaction of the substrate with Rab escort protein 1 (REP1). (Microbial infection) AMPylation at Tyr-77 by L.pneumophila DrrA occurs in the switch 2 region and leads to moderate inactivation of the GTPase activity. It appears to prolong the lifetime of the GTP state of RAB1B by restricting access of GTPase effectors to switch 2 and blocking effector-stimulated GTP hydrolysis, thereby rendering RAB1B constitutively active. It is later de-AMPylated by L.pneumophila SidD, releasing RAB1B from bacterial phagosomes. In terms of processing, (Microbial infection) Phosphocholinated at Ser-76 by L.pneumophila AnkX, leading to displace GDP dissociation inhibitors (GDI). Both GDP-bound and GTP-bound forms can be phosphocholinated. Dephosphocholinated by L.pneumophila Lem3, restoring accessibility to L.pneumophila GTPase effector LepB. Post-translationally, (Microbial infection) Glycosylated by S.typhimurium protein Ssek3: arginine GlcNAcylation prevents GTPase activity, thereby disrupting vesicular protein transport from the endoplasmic reticulum (ER) to the Golgi compartment.

Its subcellular location is the cytoplasm. It localises to the membrane. The protein resides in the preautophagosomal structure membrane. The protein localises to the perinuclear region. It carries out the reaction GTP + H2O = GDP + phosphate + H(+). With respect to regulation, regulated by guanine nucleotide exchange factors (GEFs) which promote the exchange of bound GDP for free GTP. Regulated by GTPase activating proteins (GAPs) including TBC1D20 which increases the GTP hydrolysis activity. Inhibited by GDP dissociation inhibitors (GDIs). Functionally, the small GTPases Rab are key regulators of intracellular membrane trafficking, from the formation of transport vesicles to their fusion with membranes. Rabs cycle between an inactive GDP-bound form and an active GTP-bound form that is able to recruit to membranes different set of downstream effectors directly responsible for vesicle formation, movement, tethering and fusion. Plays a role in the initial events of the autophagic vacuole development which take place at specialized regions of the endoplasmic reticulum. Regulates vesicular transport between the endoplasmic reticulum and successive Golgi compartments. Required to modulate the compacted morphology of the Golgi. Promotes the recruitment of lipid phosphatase MTMR6 to the endoplasmic reticulum-Golgi intermediate compartment. The sequence is that of Ras-related protein Rab-1B from Homo sapiens (Human).